A 159-amino-acid polypeptide reads, in one-letter code: Serine-protein kinase RsbW (159 aa).

It belongs to the anti-sigma-factor family.

The catalysed reaction is L-seryl-[protein] + ATP = O-phospho-L-seryl-[protein] + ADP + H(+). It catalyses the reaction L-threonyl-[protein] + ATP = O-phospho-L-threonyl-[protein] + ADP + H(+). Functionally, negative regulator of sigma-B activity. Phosphorylates and inactivates its specific antagonist protein, RsbV. Upon phosphorylation of RsbV, RsbW is released and binds to sigma-B, thereby blocking its ability to form an RNA polymerase holoenzyme (E-sigma-B). The chain is Serine-protein kinase RsbW from Staphylococcus aureus (strain Newman).